A 678-amino-acid chain; its full sequence is Catalase (678 aa).

Basic and acidic residues predominate over residues 1 to 26; it reads MSNEREMQNKKDQQLESFRVEDEGKK. Residues 1–32 are disordered; the sequence is MSNEREMQNKKDQQLESFRVEDEGKKLTTNQG. Catalysis depends on residues histidine 75 and asparagine 148. Heme is bound at residue tyrosine 362.

It belongs to the catalase family. HPII subfamily. The cofactor is heme.

The protein localises to the cytoplasm. The catalysed reaction is 2 H2O2 = O2 + 2 H2O. In terms of biological role, decomposes hydrogen peroxide into water and oxygen; serves to protect cells from the toxic effects of hydrogen peroxide. This is Catalase (katE) from Alkalihalophilus pseudofirmus (strain ATCC BAA-2126 / JCM 17055 / OF4) (Bacillus pseudofirmus).